The following is a 123-amino-acid chain: Probable cyclase otaY (123 aa).

Belongs to the aurE cyclase family.

Its pathway is mycotoxin biosynthesis. Functionally, probable cyclase; part of the gene cluster that mediates the biosynthesis of ochratoxin A (OTA), a mycotoxin composed of a chlorinated type I polyketide dihydroisocoumarin moiety linked to L-phenylalanine, and demonstrated to have nephrotoxic, immunotoxic, genotoxic, neurotoxic, and teratogenic properties. OtaY is probably involved in the polyketide cyclization. The pathway begins with the highly reducing polyketide synthase otaA that catalyzes the formation of the isocoumarin group during the initial stages of biosynthesis, starting from one acetate and 4 malonate units, to originate the characteristic pentaketide skeleton 7-methylmellein (7-MM) of the OTA molecule. The newly identified cyclase otaY might be involved in the polyketide cyclization reaction during the initial steps of the OTA biosynthesis. 7-MM is then oxidized into 7-carboxymellein (also called ochratoxin beta) by the cytochrome P450 monooxygenase otaC. The NRPS encoded by the otaB gene is involved in the linking of phenylalanine to the dihydroisocoumarin ring. The reaction catalyzed by NRPS results in the production of ochratoxin B (OTB), which is the non-chlorinated analog of OTA and which subsequently serves as the substrate of the halogenase otaD for chlorination activity to form the final molecular structure of OTA, containing a chlorine atom in the C-5 position of the molecule. The chain is Probable cyclase otaY from Aspergillus carbonarius (strain ITEM 5010).